A 313-amino-acid polypeptide reads, in one-letter code: D-alanine--D-alanine ligase (313 aa).

Residues 107–303 (KQAFAAAGLT…FEALVEQIAC (197 aa)) form the ATP-grasp domain. 135-188 (PFGLPVVVKPVQEGSSVGVTIVKKPEDLQAALDEAFRYDTLVLVEKYIKGQEVQ) is a binding site for ATP. Positions 256, 269, and 271 each coordinate Mg(2+).

Belongs to the D-alanine--D-alanine ligase family. Mg(2+) is required as a cofactor. Requires Mn(2+) as cofactor.

Its subcellular location is the cytoplasm. The enzyme catalyses 2 D-alanine + ATP = D-alanyl-D-alanine + ADP + phosphate + H(+). The protein operates within cell wall biogenesis; peptidoglycan biosynthesis. Its function is as follows. Cell wall formation. The sequence is that of D-alanine--D-alanine ligase from Trichlorobacter lovleyi (strain ATCC BAA-1151 / DSM 17278 / SZ) (Geobacter lovleyi).